The sequence spans 455 residues: MIASTAKPHVILAAVPIYGHVEKLRIIGCDLQKRGYAVTFLTGTVWREFVEHAGLPFFALKANADFDGRDFAKAFPMWDKLPPGPPRFGYLRHSLIDQMPAQHESVQAVLEDVAARGLKAVVIQDTAFFGVNPIQMGAPGITPAGTITVGITPLPLFSIDTAPFGSGLPPDSSPEGRARNIAANEKIKAVAQISQAHFTQTMKSLGVKTVPDDLLNSAVTTPDRFLQLCIESFEYPRSDAPSNLRYIGALAPGDENKSQHPLPDWWDLVIKHDKPLVVVSQGTLSNHNYKDLIIPTLEALKDLDIRVVTTLVRTDSLDGDLQDFQIPSNVLVAKFIPFEELFKHADLVVNNGGYGTVQTAFGHGVPMVLAGQTEDKTETNARAAWSGAAINLACQTATAEQVRDAVEKVLNDPKYKNRAMELKKEYEACDALQSIADNIDELAAAAAAEEEDENE.

The protein belongs to the UDP-glycosyltransferase family.

It catalyses the reaction exophillate + UDP-alpha-D-galactose = phaeomoniecin D + UDP + H(+). Its pathway is secondary metabolite biosynthesis. Catalyzes the second glycosylation step during phaeomoniecin D biosynthesis, the further O-galactosylation of exophillic acid (produced by the O-glycosyltransferase OGT1) to yield the 4-O-beta-D-galactoside phaeomoniecin D. In Phaeomoniella chlamydospora (Phaeoacremonium chlamydosporum), this protein is UDP-glycosyltransferase 2.